We begin with the raw amino-acid sequence, 701 residues long: Putative pectinesterase/pectinesterase inhibitor 43 (701 aa).

Residues 1-22 (MNKYVLLGVTALIMAMVICVEA) form the signal peptide. The interval 42–195 (MITKTTVSII…QHLTSNGLAI (154 aa)) is pectinesterase inhibitor 43. Low complexity-rich tracts occupy residues 221–256 (GILGSGSSRDESVGSSQDSPPNEDSSDDSPSTVDSS) and 263–275 (SSSENQSSDSSNN). The disordered stretch occupies residues 221 to 351 (GILGSGSSRD…DPLRKLNPLN (131 aa)). N-linked (GlcNAc...) asparagine glycosylation is present at asparagine 267. Composition is skewed to polar residues over residues 276 to 287 (RPLDSSKNQQME) and 313 to 338 (QKSTSSENQPLDSSENPPQKSTSSEN). The segment at 391–688 (NVVVAKDGSG…FAPGNFLRGN (298 aa)) is pectinesterase 43. Positions 467 and 497 each coordinate substrate. The active-site Proton donor; for pectinesterase activity is aspartate 520. A disulfide bridge links cysteine 534 with cysteine 554. Aspartate 541 serves as the catalytic Nucleophile; for pectinesterase activity. Residues arginine 609 and tryptophan 611 each contribute to the substrate site. A glycan (N-linked (GlcNAc...) asparagine) is linked at asparagine 637.

This sequence in the N-terminal section; belongs to the PMEI family. In the C-terminal section; belongs to the pectinesterase family. Expressed in flower buds.

It localises to the secreted. The protein resides in the cell wall. It catalyses the reaction [(1-&gt;4)-alpha-D-galacturonosyl methyl ester](n) + n H2O = [(1-&gt;4)-alpha-D-galacturonosyl](n) + n methanol + n H(+). Its pathway is glycan metabolism; pectin degradation; 2-dehydro-3-deoxy-D-gluconate from pectin: step 1/5. In terms of biological role, acts in the modification of cell walls via demethylesterification of cell wall pectin. The sequence is that of Putative pectinesterase/pectinesterase inhibitor 43 (PME43) from Arabidopsis thaliana (Mouse-ear cress).